The following is a 188-amino-acid chain: Elongation factor P (188 aa).

The protein belongs to the elongation factor P family.

The protein localises to the cytoplasm. It participates in protein biosynthesis; polypeptide chain elongation. Involved in peptide bond synthesis. Stimulates efficient translation and peptide-bond synthesis on native or reconstituted 70S ribosomes in vitro. Probably functions indirectly by altering the affinity of the ribosome for aminoacyl-tRNA, thus increasing their reactivity as acceptors for peptidyl transferase. This Bdellovibrio bacteriovorus (strain ATCC 15356 / DSM 50701 / NCIMB 9529 / HD100) protein is Elongation factor P.